We begin with the raw amino-acid sequence, 212 residues long: Peptide methionine sulfoxide reductase MsrA (212 aa).

Residues 1-14 (MNSIDKTQRITQSD) show a composition bias toward polar residues. Positions 1–21 (MNSIDKTQRITQSDALPGRST) are disordered. Residue C52 is part of the active site.

It belongs to the MsrA Met sulfoxide reductase family.

It carries out the reaction L-methionyl-[protein] + [thioredoxin]-disulfide + H2O = L-methionyl-(S)-S-oxide-[protein] + [thioredoxin]-dithiol. It catalyses the reaction [thioredoxin]-disulfide + L-methionine + H2O = L-methionine (S)-S-oxide + [thioredoxin]-dithiol. In terms of biological role, has an important function as a repair enzyme for proteins that have been inactivated by oxidation. Catalyzes the reversible oxidation-reduction of methionine sulfoxide in proteins to methionine. This chain is Peptide methionine sulfoxide reductase MsrA, found in Pectobacterium atrosepticum (strain SCRI 1043 / ATCC BAA-672) (Erwinia carotovora subsp. atroseptica).